We begin with the raw amino-acid sequence, 285 residues long: NAD kinase (285 aa).

The active-site Proton acceptor is aspartate 68. NAD(+) contacts are provided by residues aspartate 68–glycine 69, asparagine 142–aspartate 143, arginine 153, lysine 170, aspartate 172, threonine 183–serine 188, and glutamine 242.

The protein belongs to the NAD kinase family. Requires a divalent metal cation as cofactor.

The protein localises to the cytoplasm. The enzyme catalyses NAD(+) + ATP = ADP + NADP(+) + H(+). Involved in the regulation of the intracellular balance of NAD and NADP, and is a key enzyme in the biosynthesis of NADP. Catalyzes specifically the phosphorylation on 2'-hydroxyl of the adenosine moiety of NAD to yield NADP. The chain is NAD kinase from Syntrophotalea carbinolica (strain DSM 2380 / NBRC 103641 / GraBd1) (Pelobacter carbinolicus).